A 160-amino-acid polypeptide reads, in one-letter code: SsrA-binding protein (160 aa).

It belongs to the SmpB family.

Its subcellular location is the cytoplasm. Required for rescue of stalled ribosomes mediated by trans-translation. Binds to transfer-messenger RNA (tmRNA), required for stable association of tmRNA with ribosomes. tmRNA and SmpB together mimic tRNA shape, replacing the anticodon stem-loop with SmpB. tmRNA is encoded by the ssrA gene; the 2 termini fold to resemble tRNA(Ala) and it encodes a 'tag peptide', a short internal open reading frame. During trans-translation Ala-aminoacylated tmRNA acts like a tRNA, entering the A-site of stalled ribosomes, displacing the stalled mRNA. The ribosome then switches to translate the ORF on the tmRNA; the nascent peptide is terminated with the 'tag peptide' encoded by the tmRNA and targeted for degradation. The ribosome is freed to recommence translation, which seems to be the essential function of trans-translation. This Photorhabdus laumondii subsp. laumondii (strain DSM 15139 / CIP 105565 / TT01) (Photorhabdus luminescens subsp. laumondii) protein is SsrA-binding protein.